The sequence spans 571 residues: Zinc metalloproteinase nas-15 (571 aa).

Positions 1-15 are cleaved as a signal peptide; it reads MREYVLIFLVAPVFA. An N-linked (GlcNAc...) asparagine glycan is attached at asparagine 92. Residues 114–307 enclose the Peptidase M12A domain; it reads NAIKNRLQLW…FKINTLYGCP (194 aa). Disulfide bonds link cysteine 156–cysteine 306, cysteine 178–cysteine 197, cysteine 354–cysteine 388, cysteine 361–cysteine 381, and cysteine 370–cysteine 385. Histidine 205 provides a ligand contact to Zn(2+). Glutamate 206 is an active-site residue. The Zn(2+) site is built by histidine 209 and histidine 215. Residues 354 to 388 enclose the ShKT 1 domain; the sequence is CRNLRGDCDDLAKQGWCIRNPGWMRANCPISCGMC. The segment covering 407–420 has biased composition (low complexity); it reads TTTARPQKPVTQPI. Residues 407 to 426 form a disordered region; it reads TTTARPQKPVTQPIQPLPPV. 3 cysteine pairs are disulfide-bonded: cysteine 437–cysteine 471, cysteine 444–cysteine 464, and cysteine 453–cysteine 468. The region spanning 437 to 471 is the ShKT 2 domain; it reads CEDLRVDCLVLVSQRYCKISQNFMKSYCAKSCGFC. The segment at 500–530 is disordered; that stretch reads IRSRSPAPPVSTTTKAAPTTSTTSAAPYSPT. A compositionally biased stretch (low complexity) spans 509–527; sequence VSTTTKAAPTTSTTSAAPY. 3 disulfides stabilise this stretch: cysteine 536/cysteine 571, cysteine 543/cysteine 564, and cysteine 552/cysteine 568. The region spanning 536–571 is the ShKT 3 domain; it reads CSDRKHFCSHWKSAGFCEGIFMNYMKKNCPASCGLC.

Zn(2+) is required as a cofactor. As to expression, expressed in pharyngeal marginal cells and muscles.

Its subcellular location is the secreted. Functionally, metalloprotease. The protein is Zinc metalloproteinase nas-15 (nas-15) of Caenorhabditis elegans.